A 730-amino-acid chain; its full sequence is Ribosomal RNA large subunit methyltransferase K/L (730 aa).

The 112-residue stretch at 46–157 (TAYRLCLWSR…RGEAILSLDL (112 aa)) folds into the THUMP domain. Basic and acidic residues predominate over residues 399 to 408 (AAVEEGEPRR). The tract at residues 399–418 (AAVEEGEPRRQAPVASEPAR) is disordered.

The protein belongs to the methyltransferase superfamily. RlmKL family.

It is found in the cytoplasm. The enzyme catalyses guanosine(2445) in 23S rRNA + S-adenosyl-L-methionine = N(2)-methylguanosine(2445) in 23S rRNA + S-adenosyl-L-homocysteine + H(+). It catalyses the reaction guanosine(2069) in 23S rRNA + S-adenosyl-L-methionine = N(2)-methylguanosine(2069) in 23S rRNA + S-adenosyl-L-homocysteine + H(+). In terms of biological role, specifically methylates the guanine in position 2445 (m2G2445) and the guanine in position 2069 (m7G2069) of 23S rRNA. The chain is Ribosomal RNA large subunit methyltransferase K/L from Pseudomonas entomophila (strain L48).